Here is a 302-residue protein sequence, read N- to C-terminus: Transmembrane protein 191 (302 aa).

The stretch at 5-147 (QEQLLQLQKD…HLELAEAKFS (143 aa)) forms a coiled coil. Positions 39 to 66 (LTGRLEELRERERSLQRRRSQASRAIRG) are disordered. A compositionally biased stretch (basic and acidic residues) spans 42 to 53 (RLEELRERERSL). Residues 242-262 (LQTLLLLPLGFLVLPLIYVVL) form a helical membrane-spanning segment.

This sequence belongs to the TMEM191 family.

It is found in the membrane. This Mus musculus (Mouse) protein is Transmembrane protein 191.